The primary structure comprises 145 residues: Protein SprT-like (145 aa).

Residues 5–141 enclose the SprT-like domain; sequence NYVKQVSVED…CGRCMGKLRL (137 aa). Histidine 64 serves as a coordination point for Zn(2+). Glutamate 65 is an active-site residue. Zn(2+) is bound at residue histidine 68.

This sequence belongs to the SprT family. Requires Zn(2+) as cofactor.

It is found in the cytoplasm. In Streptococcus sanguinis (strain SK36), this protein is Protein SprT-like.